The following is a 252-amino-acid chain: Adenosylcobinamide-GDP ribazoletransferase (252 aa).

7 consecutive transmembrane segments (helical) span residues 4-24 (LFKG…PYVE), 38-58 (PIIG…INYL), 60-80 (ISIV…TGML), 113-133 (FSVI…HSFL), 141-161 (ILMF…ITII), 190-210 (LVCI…LLIV), and 232-252 (VAGF…CLFT).

This sequence belongs to the CobS family. It depends on Mg(2+) as a cofactor.

The protein resides in the cell membrane. It carries out the reaction alpha-ribazole + adenosylcob(III)inamide-GDP = adenosylcob(III)alamin + GMP + H(+). The enzyme catalyses alpha-ribazole 5'-phosphate + adenosylcob(III)inamide-GDP = adenosylcob(III)alamin 5'-phosphate + GMP + H(+). The protein operates within cofactor biosynthesis; adenosylcobalamin biosynthesis; adenosylcobalamin from cob(II)yrinate a,c-diamide: step 7/7. Joins adenosylcobinamide-GDP and alpha-ribazole to generate adenosylcobalamin (Ado-cobalamin). Also synthesizes adenosylcobalamin 5'-phosphate from adenosylcobinamide-GDP and alpha-ribazole 5'-phosphate. The sequence is that of Adenosylcobinamide-GDP ribazoletransferase from Clostridium botulinum (strain Eklund 17B / Type B).